Consider the following 603-residue polypeptide: Probable potassium transport system protein Kup (603 aa).

The next 12 helical transmembrane spans lie at 15 to 35 (GLVF…IFLL), 43 to 63 (VIGV…VEYA), 94 to 114 (AAFI…DGVI), 136 to 156 (IGQG…FSVQ), 163 to 183 (ITWV…FSGI), 201 to 221 (AISF…EVIL), 244 to 264 (AWRL…AFII), 284 to 304 (IYIP…QAMI), 336 to 356 (IYIG…IFEF), 367 to 387 (GLAV…IFYL), 391 to 411 (MFRS…LLSN), and 415 to 435 (IPHG…LIII).

This sequence belongs to the HAK/KUP transporter (TC 2.A.72) family.

The protein resides in the cell membrane. The catalysed reaction is K(+)(in) + H(+)(in) = K(+)(out) + H(+)(out). Its function is as follows. Transport of potassium into the cell. Likely operates as a K(+):H(+) symporter. The sequence is that of Probable potassium transport system protein Kup from Methanosarcina acetivorans (strain ATCC 35395 / DSM 2834 / JCM 12185 / C2A).